Consider the following 686-residue polypeptide: tRNA (guanine(37)-N(1))-methyltransferase (686 aa).

The tract at residues 206–244 (GGPSSVSLTEDTDGSEQPQGLPRAAAAPPPPSNKRRASY) is disordered. Residues His-428, 466–467 (DL), 495–496 (DG), and Asn-530 each bind S-adenosyl-L-methionine.

Belongs to the class I-like SAM-binding methyltransferase superfamily. TRM5/TYW2 family. As to quaternary structure, monomer.

Its subcellular location is the mitochondrion matrix. The protein localises to the nucleus. It localises to the cytoplasm. The catalysed reaction is guanosine(37) in tRNA + S-adenosyl-L-methionine = N(1)-methylguanosine(37) in tRNA + S-adenosyl-L-homocysteine + H(+). In terms of biological role, specifically methylates the N1 position of guanosine-37 in various cytoplasmic and mitochondrial tRNAs. Methylation is not dependent on the nature of the nucleoside 5' of the target nucleoside. This is the first step in the biosynthesis of wybutosine (yW), a modified base adjacent to the anticodon of tRNAs and required for accurate decoding. This Leishmania major protein is tRNA (guanine(37)-N(1))-methyltransferase.